Here is an 870-residue protein sequence, read N- to C-terminus: Valine--tRNA ligase (870 aa).

Residues 1–13 (MTSQTFTTSSATP) are compositionally biased toward polar residues. Residues 1 to 21 (MTSQTFTTSSATPPTRGVVPD) are disordered. The short motif at 63–73 (PTVSGHLHPGH) is the 'HIGH' region element. The segment at 479 to 505 (YDHPLLPDESALPVDPASQPPSGYQES) is disordered. A 'KMSKS' region motif is present at residues 595–599 (KMSKS). Lys598 provides a ligand contact to ATP.

Belongs to the class-I aminoacyl-tRNA synthetase family. ValS type 2 subfamily. In terms of assembly, monomer.

Its subcellular location is the cytoplasm. It carries out the reaction tRNA(Val) + L-valine + ATP = L-valyl-tRNA(Val) + AMP + diphosphate. In terms of biological role, catalyzes the attachment of valine to tRNA(Val). As ValRS can inadvertently accommodate and process structurally similar amino acids such as threonine, to avoid such errors, it has a 'posttransfer' editing activity that hydrolyzes mischarged Thr-tRNA(Val) in a tRNA-dependent manner. This Cutibacterium acnes (strain DSM 16379 / KPA171202) (Propionibacterium acnes) protein is Valine--tRNA ligase.